A 205-amino-acid polypeptide reads, in one-letter code: uncharacterized protein (205 aa).

Helical transmembrane passes span 4-24, 105-125, 130-150, 151-171, and 182-202; these read LAFL…AIDD, KWFI…LWIL, FLLF…KIPN, WLFN…VPEC, and ITIP…KFII.

The protein resides in the cell membrane. This is an uncharacterized protein from Methanocaldococcus jannaschii (strain ATCC 43067 / DSM 2661 / JAL-1 / JCM 10045 / NBRC 100440) (Methanococcus jannaschii).